A 103-amino-acid chain; its full sequence is uncharacterized protein (103 aa).

In terms of domain architecture, EthD spans A12–S88.

This is an uncharacterized protein from Rhodococcus erythropolis (Arthrobacter picolinophilus).